The primary structure comprises 537 residues: Zinc finger protein 703 (537 aa).

Disordered regions lie at residues 1 to 38, 90 to 254, and 300 to 323; these read MNCSPPGSSTDTERQSSSSGTPVAPRPTLAPTHPLRQA, SQIG…VAPV, and VGNQLPGTLGLPGKPPSSSPLTGA. Residues 101-111 show a composition bias toward polar residues; that stretch reads SKLNSVTSSGL. Positions 149 to 158 are enriched in low complexity; that stretch reads GSSSGGAADK. A compositionally biased stretch (polar residues) spans 176–185; the sequence is SPSSRVSSPG. The span at 188 to 203 shows a compositional bias: basic and acidic residues; the sequence is CDSKNNESQEKKEPEA. Residues 205 to 220 are compositionally biased toward polar residues; it reads KANSETSQVNPTLTRA. Residues 221-232 show a composition bias toward low complexity; the sequence is STSNSSAESSQS. The C2H2-type zinc-finger motif lies at 409–437; the sequence is HICNWVSASGPCDKRFSTSEELLAHLRTH.

The protein belongs to the Elbow/Noc family.

It is found in the nucleus. Its subcellular location is the cytoplasm. In terms of biological role, transcriptional corepressor which does not bind directly to DNA and may regulate transcription through recruitment of histone deacetylases to gene promoters. Regulates cell adhesion, migration and proliferation. Involved in specification of the lateral neural plate border (NPB). May be required for segmental gene expression during hindbrain development. This chain is Zinc finger protein 703 (znf703), found in Xenopus tropicalis (Western clawed frog).